The primary structure comprises 637 residues: Chaperone protein HtpG (637 aa).

Residues 1 to 345 (MSQQETHGFQ…SNDLPLNVSR (345 aa)) form an a; substrate-binding region. The b stretch occupies residues 346-562 (EILQDNQVTT…EGEMSTQMIK (217 aa)). Positions 563–637 (LMQAAGQPVP…TNQMLLASVK (75 aa)) are c.

Belongs to the heat shock protein 90 family. As to quaternary structure, homodimer.

It localises to the cytoplasm. Functionally, molecular chaperone. Has ATPase activity. In Shewanella frigidimarina (strain NCIMB 400), this protein is Chaperone protein HtpG.